Consider the following 608-residue polypeptide: ATP-binding protein Uup (608 aa).

ABC transporter domains lie at 7 to 217 and 285 to 512; these read APVL…AADA and VEAK…FAPV. ATP-binding positions include 42–49 and 317–324; these read GRNGAGKS and GPNGAGKT. Residues 522–608 are C-terminal domain (CTD), binds DNA; the sequence is AAPAAPKKSA…LEEKKENLAG (87 aa).

It belongs to the ABC transporter superfamily. ABCF family. Uup subfamily.

It localises to the cytoplasm. It carries out the reaction ATP + H2O = ADP + phosphate + H(+). Functionally, probably plays a role in ribosome assembly or function. May be involved in resolution of branched DNA intermediates that result from template switching in postreplication gaps. Binds DNA and has ATPase activity. Its function is as follows. One of a cluster of genes involved in attachment of the holdfast to the cell. The holdfast is a structure that allows the bacteria to firmly adhere to surfaces. This is ATP-binding protein Uup from Caulobacter vibrioides (strain ATCC 19089 / CIP 103742 / CB 15) (Caulobacter crescentus).